A 570-amino-acid polypeptide reads, in one-letter code: Peptidyl-prolyl cis-trans isomerase FKBP9 (570 aa).

An N-terminal signal peptide occupies residues 1–24; it reads MALGARGWRRRSLLLLLLWVTGQA. PPIase FKBP-type domains are found at residues 54-142, 166-254, 278-365, and 389-477; these read GDFV…VDIW, SDFV…LDLH, GDFL…IDFH, and GDYL…LELV. Asparagine 174, asparagine 286, asparagine 302, and asparagine 397 each carry an N-linked (GlcNAc...) asparagine glycan. 2 EF-hand domains span residues 488-523 and 533-568; these read WNGEVSPNLFEEIDRDGNGEVLLEEFSEYIHAQVAT and NAEMIVKNMFTNQDRNGDGKVTAEEFKLKDQEAKHD. Ca(2+) is bound by residues aspartate 501, aspartate 503, asparagine 505, glutamate 507, glutamate 512, aspartate 546, asparagine 548, aspartate 550, lysine 552, and glutamate 557. The Prevents secretion from ER motif lies at 567-570; sequence HDEL.

Post-translationally, phosphorylated. In terms of tissue distribution, predominantly expressed in heart, skeletal muscle, lung, liver and kidney. Lower levels found in brain, spleen and testis.

The protein localises to the endoplasmic reticulum lumen. It carries out the reaction [protein]-peptidylproline (omega=180) = [protein]-peptidylproline (omega=0). With respect to regulation, inhibited by FK506. Its function is as follows. PPIases accelerate the folding of proteins during protein synthesis. The protein is Peptidyl-prolyl cis-trans isomerase FKBP9 (Fkbp9) of Mus musculus (Mouse).